An 86-amino-acid polypeptide reads, in one-letter code: uncharacterized protein (86 aa).

As to expression, retina-specific.

This is an uncharacterized protein from Homo sapiens (Human).